We begin with the raw amino-acid sequence, 389 residues long: Putative nickel insertion protein (389 aa).

The protein belongs to the LarC family.

This is Putative nickel insertion protein from Desulfotalea psychrophila (strain LSv54 / DSM 12343).